Consider the following 73-residue polypeptide: Ocellatin-PT7 (73 aa).

The first 22 residues, 1–22 (MAFLKKSLFLVLFLGLVSLSIC), serve as a signal peptide directing secretion. The propeptide occupies 23-39 (DEEKRQDEDDDDDDDEE).

Expressed by the skin glands.

Its subcellular location is the secreted. In terms of biological role, has antibacterial activity against Gram-negative bacteria E.coli ATCC 25922 (MIC=60 uM) and S.choleraesuis ATCC 14028 (MIC=240 uM) and against Gram-positive bacterium S.aureus ATCC 29313 (MIC=240 uM). Shows no hemolytic activity and no cytotoxicity. This Leptodactylus pustulatus (Ceara white-lipped frog) protein is Ocellatin-PT7.